The chain runs to 226 residues: ATP synthase subunit a (226 aa).

6 helical membrane-spanning segments follow: residues 17 to 37, 79 to 99, 105 to 125, 134 to 154, 176 to 196, and 199 to 219; these read FSYF…AMMA, LVAT…LPGF, SLNL…FEGI, FAHF…IEIV, LFLM…AYVL, and FMAF…LAGA.

It belongs to the ATPase A chain family. F-type ATPases have 2 components, CF(1) - the catalytic core - and CF(0) - the membrane proton channel. CF(1) has five subunits: alpha(3), beta(3), gamma(1), delta(1), epsilon(1). CF(0) has three main subunits: a(1), b(2) and c(9-12). The alpha and beta chains form an alternating ring which encloses part of the gamma chain. CF(1) is attached to CF(0) by a central stalk formed by the gamma and epsilon chains, while a peripheral stalk is formed by the delta and b chains.

Its subcellular location is the cell inner membrane. In terms of biological role, key component of the proton channel; it plays a direct role in the translocation of protons across the membrane. This chain is ATP synthase subunit a, found in Campylobacter jejuni subsp. doylei (strain ATCC BAA-1458 / RM4099 / 269.97).